A 441-amino-acid polypeptide reads, in one-letter code: 3'-N-debenzoyl-2'-deoxytaxol N-benzoyltransferase (441 aa).

Catalysis depends on proton acceptor residues His163 and Asp373.

Belongs to the plant acyltransferase family.

The catalysed reaction is 3'-N-debenzoyltaxol + benzoyl-CoA = paclitaxel + CoA + H(+). Its pathway is alkaloid biosynthesis; taxol biosynthesis. In terms of biological role, catalyzes the stereoselective coupling of the surrogate substrate N-debenzoyl-(3'RS)-2'-deoxytaxol with benzoyl-CoA to form predominantly one 3'-epimer of 2'-deoxytaxol. This enzymatic reaction constitutes the final acylation in the taxol biosynthetic pathway. The sequence is that of 3'-N-debenzoyl-2'-deoxytaxol N-benzoyltransferase from Taxus canadensis (Canadian yew).